An 853-amino-acid chain; its full sequence is WEB family protein At5g16730, chloroplastic (853 aa).

Low complexity-rich tracts occupy residues 1–27 (MASKTKTSLSETTTTTTPTGKSSPATP) and 36–49 (KSETSNNNSPSTTT). Residues 1-84 (MASKTKTSLS…PTPPEKSQAR (84 aa)) constitute a chloroplast transit peptide. 4 disordered regions span residues 1-106 (MASK…IKED), 386-465 (KEDL…SKKA), 666-765 (LAKK…SVEV), and 778-820 (KEAF…ALTA). A compositionally biased stretch (polar residues) spans 92–101 (ESPQTTTRLS). The stretch at 94 to 670 (PQTTTRLSQI…LEEAILAKKQ (577 aa)) forms a coiled coil. 3 stretches are compositionally biased toward basic and acidic residues: residues 402–465 (EVSK…SKKA), 698–718 (NGHRSVEEKSAKVETLDHEPP), and 732–753 (MEEKEVNGKPEVETEKKEKKDE). Acidic residues predominate over residues 754–763 (SQDDDKDDSV). The segment covering 778–788 (KEAFPDKKSEL) has biased composition (basic and acidic residues). Ser-790 bears the Phosphoserine mark. Residues 797–807 (SSKIDESDKTS) show a composition bias toward basic and acidic residues.

This sequence belongs to the WEB family.

It localises to the plastid. The protein localises to the chloroplast. The chain is WEB family protein At5g16730, chloroplastic from Arabidopsis thaliana (Mouse-ear cress).